A 604-amino-acid polypeptide reads, in one-letter code: Aspartate--tRNA(Asp/Asn) ligase (604 aa).

L-aspartate is bound at residue E174. The tract at residues Q198–K201 is aspartate. R220 contacts L-aspartate. ATP-binding positions include R220–E222 and Q229. Position 460 (H460) interacts with L-aspartate. E494 serves as a coordination point for ATP. R501 lines the L-aspartate pocket. G546–R549 provides a ligand contact to ATP.

This sequence belongs to the class-II aminoacyl-tRNA synthetase family. Type 1 subfamily. Homodimer.

The protein localises to the cytoplasm. The catalysed reaction is tRNA(Asx) + L-aspartate + ATP = L-aspartyl-tRNA(Asx) + AMP + diphosphate. Functionally, aspartyl-tRNA synthetase with relaxed tRNA specificity since it is able to aspartylate not only its cognate tRNA(Asp) but also tRNA(Asn). Reaction proceeds in two steps: L-aspartate is first activated by ATP to form Asp-AMP and then transferred to the acceptor end of tRNA(Asp/Asn). The chain is Aspartate--tRNA(Asp/Asn) ligase from Paracidovorax citrulli (strain AAC00-1) (Acidovorax citrulli).